The chain runs to 204 residues: Small ribosomal subunit protein uS4 (204 aa).

The 66-residue stretch at 92–157 (RRLDALVLRS…KPLFEVAREG (66 aa)) folds into the S4 RNA-binding domain.

The protein belongs to the universal ribosomal protein uS4 family. As to quaternary structure, part of the 30S ribosomal subunit. Contacts protein S5. The interaction surface between S4 and S5 is involved in control of translational fidelity.

Its function is as follows. One of the primary rRNA binding proteins, it binds directly to 16S rRNA where it nucleates assembly of the body of the 30S subunit. With S5 and S12 plays an important role in translational accuracy. This chain is Small ribosomal subunit protein uS4, found in Streptomyces avermitilis (strain ATCC 31267 / DSM 46492 / JCM 5070 / NBRC 14893 / NCIMB 12804 / NRRL 8165 / MA-4680).